Consider the following 217-residue polypeptide: Probable GTP-binding protein EngB (217 aa).

Residues 24–207 (SQPEICFAGR…HELIESWLIP (184 aa)) enclose the EngB-type G domain. Residues 32-39 (GRSNAGKS), 59-63 (GRTQH), 81-84 (DLPG), 148-151 (TKCD), and 185-188 (LFSA) each bind GTP. Mg(2+) is bound by residues S39 and T61.

Belongs to the TRAFAC class TrmE-Era-EngA-EngB-Septin-like GTPase superfamily. EngB GTPase family. Requires Mg(2+) as cofactor.

Necessary for normal cell division and for the maintenance of normal septation. The sequence is that of Probable GTP-binding protein EngB from Paraburkholderia phytofirmans (strain DSM 17436 / LMG 22146 / PsJN) (Burkholderia phytofirmans).